The following is a 921-amino-acid chain: Translation initiation factor IF-2 (921 aa).

The disordered stretch occupies residues Met1 to Leu296. A compositionally biased stretch (low complexity) spans Arg80–Ser89. Basic and acidic residues predominate over residues Ala116–Ala182. Over residues Pro183–Gly257 the composition is skewed to low complexity. In terms of domain architecture, tr-type G spans Pro417–Asp586. The tract at residues Gly426 to Thr433 is G1. Position 426–433 (Gly426–Thr433) interacts with GTP. The interval Gly451 to His455 is G2. The G3 stretch occupies residues Asp474–Gly477. Residues Asp474–His478 and Asn528–Asp531 each bind GTP. Residues Asn528–Asp531 are G4. The interval Ser564–Lys566 is G5.

This sequence belongs to the TRAFAC class translation factor GTPase superfamily. Classic translation factor GTPase family. IF-2 subfamily.

Its subcellular location is the cytoplasm. One of the essential components for the initiation of protein synthesis. Protects formylmethionyl-tRNA from spontaneous hydrolysis and promotes its binding to the 30S ribosomal subunits. Also involved in the hydrolysis of GTP during the formation of the 70S ribosomal complex. This is Translation initiation factor IF-2 from Bradyrhizobium sp. (strain BTAi1 / ATCC BAA-1182).